Consider the following 138-residue polypeptide: Putative pre-16S rRNA nuclease (138 aa).

The protein belongs to the YqgF nuclease family.

The protein localises to the cytoplasm. Functionally, could be a nuclease involved in processing of the 5'-end of pre-16S rRNA. This is Putative pre-16S rRNA nuclease from Listeria innocua serovar 6a (strain ATCC BAA-680 / CLIP 11262).